The chain runs to 503 residues: Lycopene beta cyclase, chloroplastic/chromoplastic (503 aa).

The N-terminal 85 residues, 1 to 85 (MDTLLRTHNR…DLPLYDPSKA (85 aa)), are a transit peptide targeting the chloroplast and chromoplast. 90–117 (LAVVGGGPLARSCSTSLGGGLSVVSIDP) provides a ligand contact to NAD(+).

It belongs to the lycopene cyclase family.

It localises to the plastid. It is found in the chloroplast. The protein resides in the chromoplast. The protein localises to the chromoplast membrane. Its subcellular location is the chloroplast membrane. It carries out the reaction a carotenoid psi-end group = a carotenoid beta-end derivative. Its pathway is carotenoid biosynthesis; beta-carotene biosynthesis. The protein operates within carotenoid biosynthesis; beta-zeacarotene biosynthesis. In terms of biological role, catalyzes the double cyclization reaction which converts lycopene to beta-carotene and neurosporene to beta-zeacarotene. The polypeptide is Lycopene beta cyclase, chloroplastic/chromoplastic (LCY1) (Narcissus pseudonarcissus (Daffodil)).